The chain runs to 154 residues: Cytochrome c' (154 aa).

The first 23 residues, 1–23 (MKHVLASTAAGLMALGLASSAIA), serve as a signal peptide directing secretion. Heme c-binding residues include Arg-35, Gln-36, Arg-95, Cys-144, Cys-147, and His-148.

As to quaternary structure, homodimer. Binds 1 heme c group covalently per subunit.

In terms of biological role, cytochrome c' is the most widely occurring bacterial c-type cytochrome. Cytochromes c' are high-spin proteins and the heme has no sixth ligand. Their exact function is not known. In Allochromatium vinosum (strain ATCC 17899 / DSM 180 / NBRC 103801 / NCIMB 10441 / D) (Chromatium vinosum), this protein is Cytochrome c' (cycA).